The following is a 125-amino-acid chain: Large ribosomal subunit protein bL19 (125 aa).

This sequence belongs to the bacterial ribosomal protein bL19 family.

Functionally, this protein is located at the 30S-50S ribosomal subunit interface and may play a role in the structure and function of the aminoacyl-tRNA binding site. The protein is Large ribosomal subunit protein bL19 of Ehrlichia ruminantium (strain Welgevonden).